A 222-amino-acid polypeptide reads, in one-letter code: Phosphoglycolate phosphatase (222 aa).

Aspartate 8 functions as the Nucleophile in the catalytic mechanism. The Mg(2+) site is built by aspartate 8 and aspartate 10. Lysine 146 provides a ligand contact to substrate. Residues aspartate 169 and aspartate 173 each coordinate Mg(2+).

This sequence belongs to the archaeal SPP-like hydrolase family. Mg(2+) is required as a cofactor.

The enzyme catalyses 2-phosphoglycolate + H2O = glycolate + phosphate. Catalyzes the dephosphorylation of 2-phosphoglycolate. This chain is Phosphoglycolate phosphatase, found in Methanothrix thermoacetophila (strain DSM 6194 / JCM 14653 / NBRC 101360 / PT) (Methanosaeta thermophila).